A 2344-amino-acid polypeptide reads, in one-letter code: Peroxide stress-activated histidine kinase mak3 (2344 aa).

One can recognise a Protein kinase domain in the interval 1 to 295 (MYSQHELRNK…GIVNDLEACL (295 aa)). Phosphoserine occurs at positions 12, 16, and 17. Over residues 486 to 503 (SGNTRKTSLLGSNHSSYS) the composition is skewed to polar residues. Positions 486 to 506 (SGNTRKTSLLGSNHSSYSDKL) are disordered. TPR repeat units follow at residues 829–862 (CHYL…IPHE) and 1340–1373 (AFAF…YAAL). A PAC domain is found at 1730–1781 (FELEIRIKRKDGVYRWNLTRCTPTTNEKNRTSFLCATIDIDDQKKARATALE). The region spanning 1792-2018 (NISHELRTPF…TFKICYDLKI (227 aa)) is the Histidine kinase domain. His1795 carries the post-translational modification Phosphohistidine; by autocatalysis. The Response regulatory domain maps to 2211 to 2333 (KILIAEDNPI…TLIKMLLQYL (123 aa)). Asp2263 is subject to 4-aspartylphosphate.

Its subcellular location is the cytoplasm. It catalyses the reaction ATP + protein L-histidine = ADP + protein N-phospho-L-histidine.. Functionally, involved in the control of the SAPK-dependent transcriptional response to peroxide stress. Regulates sty1 activity. In Schizosaccharomyces pombe (strain 972 / ATCC 24843) (Fission yeast), this protein is Peroxide stress-activated histidine kinase mak3 (mak3).